Reading from the N-terminus, the 379-residue chain is Cytochrome b (379 aa).

4 consecutive transmembrane segments (helical) span residues 33-53, 77-98, 113-133, and 178-198; these read FGSLLGICLGLQIITGLFLAM, WLIRYLHANGASMFFILLYLHI, WNIGILLLFAVMATAFMGYVL, and FFAFHFILPFIIPALVMIHFF. His-83 and His-97 together coordinate heme b. Residues His-182 and His-196 each coordinate heme b. His-201 contacts a ubiquinone. 4 consecutive transmembrane segments (helical) span residues 226-246, 288-308, 320-340, and 347-367; these read IKDIMGLLIMMLALMSLVLFS, LGGVLALVLSILVLALFPMLH, FSQCLLWMLTANLFILTWIGG, and YITIGQLASINYFFTILIVSR.

The protein belongs to the cytochrome b family. In terms of assembly, the cytochrome bc1 complex contains 11 subunits: 3 respiratory subunits (MT-CYB, CYC1 and UQCRFS1), 2 core proteins (UQCRC1 and UQCRC2) and 6 low-molecular weight proteins (UQCRH/QCR6, UQCRB/QCR7, UQCRQ/QCR8, UQCR10/QCR9, UQCR11/QCR10 and a cleavage product of UQCRFS1). This cytochrome bc1 complex then forms a dimer. The cofactor is heme b.

Its subcellular location is the mitochondrion inner membrane. Functionally, component of the ubiquinol-cytochrome c reductase complex (complex III or cytochrome b-c1 complex) that is part of the mitochondrial respiratory chain. The b-c1 complex mediates electron transfer from ubiquinol to cytochrome c. Contributes to the generation of a proton gradient across the mitochondrial membrane that is then used for ATP synthesis. The protein is Cytochrome b (MT-CYB) of Dolichotis patagonum (Patagonian mara).